A 408-amino-acid polypeptide reads, in one-letter code: Cytochrome bc1 complex Rieske iron-sulfur subunit (408 aa).

3 helical membrane-spanning segments follow: residues 56 to 76, 98 to 118, and 166 to 186; these read VGIW…TYIF, MLGI…VLYV, and LLAG…GGMI. Residues 293 to 390 enclose the Rieske domain; that stretch reads HGPRNAVMLI…ITVDEEGYLI (98 aa). Positions 333, 335, 352, and 355 each coordinate [2Fe-2S] cluster. C338 and C354 are joined by a disulfide.

Belongs to the Rieske iron-sulfur protein family. In terms of assembly, the cytochrome bc1 complex is composed of a cytochrome b (QcrB), the Rieske iron-sulfur protein (QcrA) and a diheme cytochrome c (QcrC) subunit. The bc1 complex forms a supercomplex with cytochrome c oxidase (cytochrome aa3). Requires [2Fe-2S] cluster as cofactor.

It is found in the cell membrane. Its function is as follows. Iron-sulfur subunit of the cytochrome bc1 complex, an essential component of the respiratory electron transport chain required for ATP synthesis. The bc1 complex catalyzes the oxidation of menaquinol and the reduction of cytochrome c in the respiratory chain. The bc1 complex operates through a Q-cycle mechanism that couples electron transfer to generation of the proton gradient that drives ATP synthesis. The chain is Cytochrome bc1 complex Rieske iron-sulfur subunit (qcrA) from Corynebacterium efficiens (strain DSM 44549 / YS-314 / AJ 12310 / JCM 11189 / NBRC 100395).